The sequence spans 118 residues: Putative pterin-4-alpha-carbinolamine dehydratase (118 aa).

The protein belongs to the pterin-4-alpha-carbinolamine dehydratase family.

It carries out the reaction (4aS,6R)-4a-hydroxy-L-erythro-5,6,7,8-tetrahydrobiopterin = (6R)-L-erythro-6,7-dihydrobiopterin + H2O. The polypeptide is Putative pterin-4-alpha-carbinolamine dehydratase (Xanthomonas oryzae pv. oryzae (strain PXO99A)).